The following is a 241-amino-acid chain: 2-C-methyl-D-erythritol 4-phosphate cytidylyltransferase (241 aa).

It belongs to the IspD/TarI cytidylyltransferase family. IspD subfamily.

The enzyme catalyses 2-C-methyl-D-erythritol 4-phosphate + CTP + H(+) = 4-CDP-2-C-methyl-D-erythritol + diphosphate. Its pathway is isoprenoid biosynthesis; isopentenyl diphosphate biosynthesis via DXP pathway; isopentenyl diphosphate from 1-deoxy-D-xylulose 5-phosphate: step 2/6. In terms of biological role, catalyzes the formation of 4-diphosphocytidyl-2-C-methyl-D-erythritol from CTP and 2-C-methyl-D-erythritol 4-phosphate (MEP). The polypeptide is 2-C-methyl-D-erythritol 4-phosphate cytidylyltransferase (Alkaliphilus metalliredigens (strain QYMF)).